A 61-amino-acid chain; its full sequence is Sperm protamine P1 (61 aa).

Residues 1–61 (MARYRHSRSR…RYSRRRRRRY (61 aa)) are disordered.

It belongs to the protamine P1 family. In terms of tissue distribution, testis.

The protein localises to the nucleus. It is found in the chromosome. Functionally, protamines substitute for histones in the chromatin of sperm during the haploid phase of spermatogenesis. They compact sperm DNA into a highly condensed, stable and inactive complex. The chain is Sperm protamine P1 (PRM1) from Onychogalea fraenata (Bridled nail-tailed wallaby).